Here is a 272-residue protein sequence, read N- to C-terminus: Putative MgpC-like protein MPN_102 (272 aa).

Belongs to the MgpC family.

The polypeptide is Putative MgpC-like protein MPN_102 (Mycoplasma pneumoniae (strain ATCC 29342 / M129 / Subtype 1) (Mycoplasmoides pneumoniae)).